We begin with the raw amino-acid sequence, 156 residues long: Small ribosomal subunit protein uS7 (156 aa).

Belongs to the universal ribosomal protein uS7 family. Part of the 30S ribosomal subunit. Contacts proteins S9 and S11.

One of the primary rRNA binding proteins, it binds directly to 16S rRNA where it nucleates assembly of the head domain of the 30S subunit. Is located at the subunit interface close to the decoding center, probably blocks exit of the E-site tRNA. The protein is Small ribosomal subunit protein uS7 of Hyphomonas neptunium (strain ATCC 15444).